Reading from the N-terminus, the 96-residue chain is Nucleoid-associated protein DR_0199 (96 aa).

The protein belongs to the YbaB/EbfC family. As to quaternary structure, homodimer.

Its subcellular location is the cytoplasm. The protein resides in the nucleoid. In terms of biological role, binds to DNA and alters its conformation. May be involved in regulation of gene expression, nucleoid organization and DNA protection. In Deinococcus radiodurans (strain ATCC 13939 / DSM 20539 / JCM 16871 / CCUG 27074 / LMG 4051 / NBRC 15346 / NCIMB 9279 / VKM B-1422 / R1), this protein is Nucleoid-associated protein DR_0199.